The sequence spans 66 residues: Large ribosomal subunit protein bL35 (66 aa).

Positions 1–16 (MPKQKTHRASAKRFKR) are enriched in basic residues. The tract at residues 1–20 (MPKQKTHRASAKRFKRTGNG) is disordered.

It belongs to the bacterial ribosomal protein bL35 family.

This Lactococcus lactis subsp. lactis (strain IL1403) (Streptococcus lactis) protein is Large ribosomal subunit protein bL35.